Here is a 376-residue protein sequence, read N- to C-terminus: ATP phosphoribosyltransferase regulatory subunit (376 aa).

It belongs to the class-II aminoacyl-tRNA synthetase family. HisZ subfamily. As to quaternary structure, heteromultimer composed of HisG and HisZ subunits.

The protein localises to the cytoplasm. It functions in the pathway amino-acid biosynthesis; L-histidine biosynthesis; L-histidine from 5-phospho-alpha-D-ribose 1-diphosphate: step 1/9. Functionally, required for the first step of histidine biosynthesis. May allow the feedback regulation of ATP phosphoribosyltransferase activity by histidine. In Brucella canis (strain ATCC 23365 / NCTC 10854 / RM-666), this protein is ATP phosphoribosyltransferase regulatory subunit.